A 175-amino-acid chain; its full sequence is Translation initiation factor IF-3 (175 aa).

It belongs to the IF-3 family. In terms of assembly, monomer.

The protein resides in the cytoplasm. Its function is as follows. IF-3 binds to the 30S ribosomal subunit and shifts the equilibrium between 70S ribosomes and their 50S and 30S subunits in favor of the free subunits, thus enhancing the availability of 30S subunits on which protein synthesis initiation begins. The polypeptide is Translation initiation factor IF-3 (Chlamydia trachomatis serovar D (strain ATCC VR-885 / DSM 19411 / UW-3/Cx)).